We begin with the raw amino-acid sequence, 270 residues long: Putative pyruvate, phosphate dikinase regulatory protein (270 aa).

Residue Gly148 to Thr155 participates in ADP binding.

This sequence belongs to the pyruvate, phosphate/water dikinase regulatory protein family. PDRP subfamily.

It carries out the reaction N(tele)-phospho-L-histidyl/L-threonyl-[pyruvate, phosphate dikinase] + ADP = N(tele)-phospho-L-histidyl/O-phospho-L-threonyl-[pyruvate, phosphate dikinase] + AMP + H(+). The enzyme catalyses N(tele)-phospho-L-histidyl/O-phospho-L-threonyl-[pyruvate, phosphate dikinase] + phosphate + H(+) = N(tele)-phospho-L-histidyl/L-threonyl-[pyruvate, phosphate dikinase] + diphosphate. Functionally, bifunctional serine/threonine kinase and phosphorylase involved in the regulation of the pyruvate, phosphate dikinase (PPDK) by catalyzing its phosphorylation/dephosphorylation. The chain is Putative pyruvate, phosphate dikinase regulatory protein from Bacillus cereus (strain 03BB102).